The chain runs to 497 residues: Cytochrome P450 71A12 (497 aa).

A helical membrane pass occupies residues isoleucine 4 to leucine 24. Cysteine 439 lines the heme pocket.

This sequence belongs to the cytochrome P450 family. Requires heme as cofactor.

Its subcellular location is the membrane. Functionally, converts indole-3-acetaldoxime to indole cyanohydrin. Involved in the biosynthetic pathway to 4-hydroxyindole-3-carbonyl nitrile (4-OH-ICN), a cyanogenic metabolite required for inducible pathogen defense. This chain is Cytochrome P450 71A12 (CYP71A12), found in Arabidopsis thaliana (Mouse-ear cress).